A 1212-amino-acid chain; its full sequence is Nucleolar protein 6 (1212 aa).

2 disordered regions span residues 1-72 (MGKI…PVSI) and 1156-1212 (KREQ…KSLS). Residues 1197 to 1212 (LKRKSLIKSRPLKSLS) are compositionally biased toward basic residues.

The protein belongs to the NRAP family. As to quaternary structure, part of the small subunit (SSU) processome, composed of more than 70 proteins and the RNA chaperone small nucleolar RNA (snoRNA) U3.

The protein resides in the nucleus. It is found in the nucleolus. Its subcellular location is the chromosome. Functionally, part of the small subunit (SSU) processome, first precursor of the small eukaryotic ribosomal subunit. During the assembly of the SSU processome in the nucleolus, many ribosome biogenesis factors, an RNA chaperone and ribosomal proteins associate with the nascent pre-rRNA and work in concert to generate RNA folding, modifications, rearrangements and cleavage as well as targeted degradation of pre-ribosomal RNA by the RNA exosome. This is Nucleolar protein 6 from Drosophila pseudoobscura pseudoobscura (Fruit fly).